The primary structure comprises 256 residues: Triosephosphate isomerase (256 aa).

12–14 is a binding site for substrate; it reads NWK. The active-site Electrophile is His-99. Residue Glu-169 is the Proton acceptor of the active site. Residues Gly-175, Ser-214, and 235–236 contribute to the substrate site; that span reads GG.

It belongs to the triosephosphate isomerase family. In terms of assembly, homodimer.

It is found in the cytoplasm. The catalysed reaction is D-glyceraldehyde 3-phosphate = dihydroxyacetone phosphate. The protein operates within carbohydrate biosynthesis; gluconeogenesis. It functions in the pathway carbohydrate degradation; glycolysis; D-glyceraldehyde 3-phosphate from glycerone phosphate: step 1/1. Functionally, involved in the gluconeogenesis. Catalyzes stereospecifically the conversion of dihydroxyacetone phosphate (DHAP) to D-glyceraldehyde-3-phosphate (G3P). The protein is Triosephosphate isomerase of Mesorhizobium japonicum (strain LMG 29417 / CECT 9101 / MAFF 303099) (Mesorhizobium loti (strain MAFF 303099)).